The sequence spans 69 residues: Large ribosomal subunit protein uL29 (69 aa).

It belongs to the universal ribosomal protein uL29 family.

The polypeptide is Large ribosomal subunit protein uL29 (Staphylococcus haemolyticus (strain JCSC1435)).